The following is a 354-amino-acid chain: tRNA N6-adenosine threonylcarbamoyltransferase (354 aa).

Fe cation is bound by residues H111 and H115. Residues 134–138 (LVSGG), D167, G180, and N279 each bind substrate. D319 is a binding site for Fe cation.

It belongs to the KAE1 / TsaD family. Fe(2+) is required as a cofactor.

The protein localises to the cytoplasm. It catalyses the reaction L-threonylcarbamoyladenylate + adenosine(37) in tRNA = N(6)-L-threonylcarbamoyladenosine(37) in tRNA + AMP + H(+). Functionally, required for the formation of a threonylcarbamoyl group on adenosine at position 37 (t(6)A37) in tRNAs that read codons beginning with adenine. Is involved in the transfer of the threonylcarbamoyl moiety of threonylcarbamoyl-AMP (TC-AMP) to the N6 group of A37, together with TsaE and TsaB. TsaD likely plays a direct catalytic role in this reaction. The chain is tRNA N6-adenosine threonylcarbamoyltransferase from Neisseria meningitidis.